A 220-amino-acid chain; its full sequence is Gene 32 protein (220 aa).

A disordered region spans residues 184–205 (NSAGGNGNAPGGGGAGAQVSAQ). Residues 187–199 (GGNGNAPGGGGAG) are compositionally biased toward gly residues.

The sequence is that of Gene 32 protein (32) from Mycobacterium (Mycobacteriophage L5).